The primary structure comprises 161 residues: SsrA-binding protein (161 aa).

This sequence belongs to the SmpB family.

The protein resides in the cytoplasm. Required for rescue of stalled ribosomes mediated by trans-translation. Binds to transfer-messenger RNA (tmRNA), required for stable association of tmRNA with ribosomes. tmRNA and SmpB together mimic tRNA shape, replacing the anticodon stem-loop with SmpB. tmRNA is encoded by the ssrA gene; the 2 termini fold to resemble tRNA(Ala) and it encodes a 'tag peptide', a short internal open reading frame. During trans-translation Ala-aminoacylated tmRNA acts like a tRNA, entering the A-site of stalled ribosomes, displacing the stalled mRNA. The ribosome then switches to translate the ORF on the tmRNA; the nascent peptide is terminated with the 'tag peptide' encoded by the tmRNA and targeted for degradation. The ribosome is freed to recommence translation, which seems to be the essential function of trans-translation. This is SsrA-binding protein from Mycolicibacterium smegmatis (strain ATCC 700084 / mc(2)155) (Mycobacterium smegmatis).